The chain runs to 170 residues: dCTP pyrophosphatase 1 (170 aa).

Positions 1-27 are disordered; that stretch reads MSVAGGEIRGDTGGEDTAAPGRFSFSP. S2 is modified (N-acetylserine). A Phosphoserine modification is found at S2. T12 is modified (phosphothreonine). Substrate contacts are provided by residues H38 and 47–51; that span reads WEQFH. E63 and E66 together coordinate Mg(2+). Position 73 (W73) interacts with substrate. S85 is modified (phosphoserine). The Mg(2+) site is built by E95 and D98. Y102 contributes to the substrate binding site. Residues 147 to 170 form a disordered region; that stretch reads GAISEDQAVGPADIPCDSTGQTST.

In terms of assembly, homotetramer. It depends on Mg(2+) as a cofactor.

Its subcellular location is the mitochondrion. It localises to the nucleus. The protein localises to the cytoplasm. It is found in the cytosol. The catalysed reaction is dCTP + H2O = dCMP + diphosphate + H(+). Its activity is regulated as follows. Inhibited by the reaction end product PPi. Inhibited by dCDP. Inhibited by triptolide. In terms of biological role, hydrolyzes deoxynucleoside triphosphates (dNTPs) to the corresponding nucleoside monophosphates. Has a strong preference for dCTP and its analogs including 5-iodo-dCTP and 5-methyl-dCTP for which it may even have a higher efficiency. May protect DNA or RNA against the incorporation of these genotoxic nucleotide analogs through their catabolism. The sequence is that of dCTP pyrophosphatase 1 from Homo sapiens (Human).